The chain runs to 191 residues: dCTP deaminase, dUMP-forming (191 aa).

DCTP contacts are provided by residues Lys101 to Arg106, Asp119, Thr127 to Glu129, Gln148, Tyr162, and Gln174. Catalysis depends on Glu129, which acts as the Proton donor/acceptor. The disordered stretch occupies residues Gly163–Ile191. Residues Tyr171–Ile191 show a composition bias toward polar residues.

It belongs to the dCTP deaminase family. In terms of assembly, homotrimer.

It catalyses the reaction dCTP + 2 H2O = dUMP + NH4(+) + diphosphate. It participates in pyrimidine metabolism; dUMP biosynthesis; dUMP from dCTP: step 1/1. Functionally, bifunctional enzyme that catalyzes both the deamination of dCTP to dUTP and the hydrolysis of dUTP to dUMP without releasing the toxic dUTP intermediate. The sequence is that of dCTP deaminase, dUMP-forming from Nocardioides sp. (strain ATCC BAA-499 / JS614).